The chain runs to 406 residues: MTASKILLLIIDGVGDRPCGVLGNKTPLQAAKIPNLDRLATEGICGIMDPIAPGVRGGSDTSHLSLLGYDPHIYYTGRGPLEAAGCGIKMEPGMIGFRANYATIDDDGNVIDRRAGRIPDTTEITAAVKNGVDLSKYGVEIEFSPGTGHRAALALKGKGLSAAVSSNDPKKTGVQPKTIHPDDDSKEAAFTAEVCNEFSRQAAEILKNHPVNLERKARGEFPANVVLIRGAGEMGVYETFEEKHELSGSVVAAAALIAGIGSSVGLERIPVLPTTPLDEQVRLVCRELEKKDFVLFNVKTADEYGHDGKAVEKTKYLEEVDAALLPFFDMPELMIAVCGDHSTPCTIKEHSADPVPLILHGDGTRIDLVTNYDEISCAAGGLCRISGGSLMPILLDLIDKTHKYGA.

A disordered region spans residues 164 to 184 (VSSNDPKKTGVQPKTIHPDDD).

Belongs to the BPG-independent phosphoglycerate mutase family. A-PGAM subfamily.

It catalyses the reaction (2R)-2-phosphoglycerate = (2R)-3-phosphoglycerate. The protein operates within carbohydrate degradation; glycolysis; pyruvate from D-glyceraldehyde 3-phosphate: step 3/5. Catalyzes the interconversion of 2-phosphoglycerate and 3-phosphoglycerate. The sequence is that of 2,3-bisphosphoglycerate-independent phosphoglycerate mutase from Methanocorpusculum labreanum (strain ATCC 43576 / DSM 4855 / Z).